The primary structure comprises 404 residues: Cysteine desulfurase IscS (404 aa).

Pyridoxal 5'-phosphate is bound by residues 75-76 (AT), Asn-155, Gln-183, and 203-205 (SSH). Lys-206 carries the post-translational modification N6-(pyridoxal phosphate)lysine. Thr-243 is a pyridoxal 5'-phosphate binding site. Cys-328 serves as the catalytic Cysteine persulfide intermediate. Cys-328 serves as a coordination point for [2Fe-2S] cluster.

This sequence belongs to the class-V pyridoxal-phosphate-dependent aminotransferase family. NifS/IscS subfamily. Homodimer. Forms a heterotetramer with IscU, interacts with other sulfur acceptors. The cofactor is pyridoxal 5'-phosphate.

The protein resides in the cytoplasm. The enzyme catalyses (sulfur carrier)-H + L-cysteine = (sulfur carrier)-SH + L-alanine. It participates in cofactor biosynthesis; iron-sulfur cluster biosynthesis. Master enzyme that delivers sulfur to a number of partners involved in Fe-S cluster assembly, tRNA modification or cofactor biosynthesis. Catalyzes the removal of elemental sulfur atoms from cysteine to produce alanine. Functions as a sulfur delivery protein for Fe-S cluster synthesis onto IscU, an Fe-S scaffold assembly protein, as well as other S acceptor proteins. The chain is Cysteine desulfurase IscS from Haemophilus influenzae (strain PittGG).